The chain runs to 369 residues: Phosphate acyltransferase (369 aa).

This sequence belongs to the PlsX family. Homodimer. Probably interacts with PlsY.

The protein localises to the cytoplasm. It carries out the reaction a fatty acyl-[ACP] + phosphate = an acyl phosphate + holo-[ACP]. The protein operates within lipid metabolism; phospholipid metabolism. In terms of biological role, catalyzes the reversible formation of acyl-phosphate (acyl-PO(4)) from acyl-[acyl-carrier-protein] (acyl-ACP). This enzyme utilizes acyl-ACP as fatty acyl donor, but not acyl-CoA. This is Phosphate acyltransferase from Gluconobacter oxydans (strain 621H) (Gluconobacter suboxydans).